Here is a 582-residue protein sequence, read N- to C-terminus: MEPPTSHVTNAFSDSDSASVEEGGADADADVEALRRLSDNLAAAFRSPEDFAFLADARIAVPGGGGGGGDLLVHRCVLSARSPFLRGVFARRAAAAAGGGGEDGGERLELRELLGGGGEEVEVGYEALRLVLDYLYSGRVGDLPKAACLCVDEDCAHVGCHPAVAFMAQVLFAASTFQVAELTNLFQRRLLDVLDKVEVDNLLLILSVANLCNKSCMKLLERCLDMVVRSNLDMITLEKSLPPDVIKQIIDARLSLGLISPENKGFPNKHVRRIHRALDSDDVELVRMLLTEGQTNLDDAFALHYAVEHCDSKITTELLDLALADVNHRNPRGYTVLHIAARRREPKIIVSLLTKGARPADVTFDGRKAVQISKRLTKQGDYFGVTEEGKPSPKDRLCIEILEQAERRDPQLGEASVSLAMAGESLRGRLLYLENRVALARIMFPMEARVAMDIAQVDGTLEFNLGSGANPPPERQRTTVDLNESPFIMKEEHLARMTALSKTVELGKRFFPRCSNVLDKIMDDETDPVSLGRDTSAEKRKRFHDLQDVLQKAFHEDKEENDRSGLSSSSSSTSIGAIRPRR.

A compositionally biased stretch (polar residues) spans 1–18 (MEPPTSHVTNAFSDSDSA). A disordered region spans residues 1–25 (MEPPTSHVTNAFSDSDSASVEEGGA). The 86-residue stretch at 55–140 (ADARIAVPGG…VLDYLYSGRV (86 aa)) folds into the BTB domain. A C2HC NPR-type zinc finger spans residues 147–161 (ACLCVDEDCAHVGCH). Positions 150, 155, 157, and 160 each coordinate Zn(2+). 4 ANK repeats span residues 229–258 (RSNL…SLGL), 269–299 (KHVR…NLDD), 301–328 (FALH…DVNH), and 332–361 (RGYT…RPAD). Residues 391 to 526 (PSPKDRLCIE…VLDKIMDDET (136 aa)) are salicylic acid-binding core (SBC). Arg-436 is a salicylate binding site. A disordered region spans residues 551 to 582 (QKAFHEDKEENDRSGLSSSSSSTSIGAIRPRR). Basic and acidic residues predominate over residues 553–563 (AFHEDKEENDR). Over residues 564-574 (SGLSSSSSSTS) the composition is skewed to low complexity.

It belongs to the plant 'ANKYRIN-BTB/POZ' family. 'NPR1-like' subfamily. Oligomer in an uninduced state; disulfide-linked. Forms activated monomer upon changes in cellular redox potential. Interacts with TGA2.1, TGA2.2, TGA2.3, LG2, TGAL1 and TGAL4. Interacts with NRR, RH1, RH2 and RH3.

It is found in the cytoplasm. It localises to the nucleus. Its subcellular location is the nuclear body. Its pathway is protein modification; protein ubiquitination. Its function is as follows. Salicylic acid (SA)-binding substrate-specific adapter of an E3 ubiquitin-protein ligase complex (CUL3-RBX1-BTB) which mediates the ubiquitination and subsequent proteasomal degradation of target proteins. Transcription cofactor that represses gene expression in the absence of salicylic acid (SA), when attached to negative cis-elements (W-box) with WRKY transcription factors, but stimulates gene expression upon activation by SA, when sumoylated and attached to positive cis-elements (as-1) with TGA transcription factors, thus confering immunity through a series of gene regulations ending in a significant increase in antimicrobial and defense genes expression. Key positive factor of disease resistance. Plays an essential role in benzothiadiazole (BTH)-induced resistance to the blast fungus disease caused by Magnaporthe oryzae. Involved in defense response against the bacterial blight disease caused by Xanthomonas oryzae pv. oryzae (Xoo). Over-expression of NPR1/NH1 confers disease resistance to Xoo, but also enhances herbivore susceptibility. Functions as a transcriptional coactivator of TGA2.1 and LG2 in vitro. Involved in defense response against herbivore. Plants silencing NPR1/NH1 have increased herbivore-induced trypsin proteinase inhibitors and volatiles, which reduces the performance of the striped stem borer (SSB) Chilo suppressalis. In Oryza sativa subsp. japonica (Rice), this protein is BTB/POZ domain and ankyrin repeat-containing protein NPR1.